Consider the following 295-residue polypeptide: Guided entry of tail-anchored proteins factor CAMLG (295 aa).

2 disordered regions span residues 1 to 73 and 127 to 148; these read MEPM…ILNP and GVEL…RGSH. Residues 1–188 lie on the Cytoplasmic side of the membrane; the sequence is MEPMPSATDG…RTTEEFDSFR (188 aa). A compositionally biased stretch (polar residues) spans 15-24; that stretch reads ATPSGLSASQ. Residue S53 is modified to Phosphoserine. Positions 127-138 are enriched in basic and acidic residues; that stretch reads GVELRQRNRGDL. The helical transmembrane segment at 189 to 206 threads the bilayer; sequence IFRLVGCALLALVVRAFV. Residues 207-208 are Lumenal-facing; it reads CK. C207 and C283 are oxidised to a cystine. Residues 209 to 227 traverse the membrane as a helical segment; that stretch reads YLSIFAPFLTLQLAYMGLY. Residues 228-268 are Cytoplasmic-facing; sequence KYFPKGEKKVKTTVLTAALLLSGIPAEVINRSMDTYSKMGE. The helical transmembrane segment at 269 to 287 threads the bilayer; it reads VFTDLCVYFFTFIFCHEVL. The Lumenal segment spans residues 288 to 295; sequence EYWGPEVP.

In terms of assembly, component of the Golgi to ER traffic (GET) complex, which is composed of GET1/WRB, CAMLG/GET2 and GET3/TRC40. Within the complex, GET1 and CAMLG form a heterotetramer which is stabilized by phosphatidylinositol binding and which binds to the GET3 homodimer. Interacts (via C-terminus) with GET1. Interacts (via N-terminus) with GET3. GET3 shows a higher affinity for CAMLG than for GET1. Interacts (via N-terminus) with TNFRSF13B/TACI (via C-terminus). In the central nervous system, expressed in astrocytes, microglia and neurons (at protein level).

The protein localises to the endoplasmic reticulum membrane. In terms of biological role, required for the post-translational delivery of tail-anchored (TA) proteins to the endoplasmic reticulum. Together with GET1/WRB, acts as a membrane receptor for soluble GET3/TRC40, which recognizes and selectively binds the transmembrane domain of TA proteins in the cytosol. Required for the stability of GET1. Stimulates calcium signaling in T cells through its involvement in elevation of intracellular calcium. Essential for the survival of peripheral follicular B cells. This is Guided entry of tail-anchored proteins factor CAMLG from Rattus norvegicus (Rat).